A 648-amino-acid chain; its full sequence is Acetyl-coenzyme A synthetase (648 aa).

Residues Arg-190–Arg-193 and Thr-310 contribute to the CoA site. ATP contacts are provided by residues Gly-386–Pro-388, Asp-410–Thr-415, Asp-499, and Arg-514. Ser-522 is a binding site for CoA. An ATP-binding site is contributed by Arg-525. 3 residues coordinate Mg(2+): Val-536, His-538, and Val-541. A CoA-binding site is contributed by Arg-583. The residue at position 608 (Lys-608) is an N6-acetyllysine.

Belongs to the ATP-dependent AMP-binding enzyme family. Mg(2+) is required as a cofactor. In terms of processing, acetylated. Deacetylation by the SIR2-homolog deacetylase activates the enzyme.

The catalysed reaction is acetate + ATP + CoA = acetyl-CoA + AMP + diphosphate. Functionally, catalyzes the conversion of acetate into acetyl-CoA (AcCoA), an essential intermediate at the junction of anabolic and catabolic pathways. AcsA undergoes a two-step reaction. In the first half reaction, AcsA combines acetate with ATP to form acetyl-adenylate (AcAMP) intermediate. In the second half reaction, it can then transfer the acetyl group from AcAMP to the sulfhydryl group of CoA, forming the product AcCoA. The sequence is that of Acetyl-coenzyme A synthetase from Methylobacterium radiotolerans (strain ATCC 27329 / DSM 1819 / JCM 2831 / NBRC 15690 / NCIMB 10815 / 0-1).